Reading from the N-terminus, the 667-residue chain is UvrABC system protein B (667 aa).

The 384-residue stretch at 31-414 folds into the Helicase ATP-binding domain; the sequence is AGIESGEKEQ…EMDRTKHVVQ (384 aa). 44-51 contributes to the ATP binding site; it reads GATGTGKT. The short motif at 97 to 120 is the Beta-hairpin element; sequence YYDYYQPEAYVPSSDTYIEKDSAI. A Helicase C-terminal domain is found at 435–597; that stretch reads QIDDLVGEIN…ITPHTIKKAI (163 aa). Positions 630–665 constitute a UVR domain; it reads LDMISKLEEQMKTAAKKLDFEQAATLRDTVMELKAQ.

The protein belongs to the UvrB family. As to quaternary structure, forms a heterotetramer with UvrA during the search for lesions. Interacts with UvrC in an incision complex.

Its subcellular location is the cytoplasm. In terms of biological role, the UvrABC repair system catalyzes the recognition and processing of DNA lesions. A damage recognition complex composed of 2 UvrA and 2 UvrB subunits scans DNA for abnormalities. Upon binding of the UvrA(2)B(2) complex to a putative damaged site, the DNA wraps around one UvrB monomer. DNA wrap is dependent on ATP binding by UvrB and probably causes local melting of the DNA helix, facilitating insertion of UvrB beta-hairpin between the DNA strands. Then UvrB probes one DNA strand for the presence of a lesion. If a lesion is found the UvrA subunits dissociate and the UvrB-DNA preincision complex is formed. This complex is subsequently bound by UvrC and the second UvrB is released. If no lesion is found, the DNA wraps around the other UvrB subunit that will check the other stand for damage. This Lactiplantibacillus plantarum (strain ATCC BAA-793 / NCIMB 8826 / WCFS1) (Lactobacillus plantarum) protein is UvrABC system protein B.